The primary structure comprises 331 residues: 6-phosphogluconolactonase (331 aa).

It belongs to the cycloisomerase 2 family.

The catalysed reaction is 6-phospho-D-glucono-1,5-lactone + H2O = 6-phospho-D-gluconate + H(+). It functions in the pathway carbohydrate degradation; pentose phosphate pathway; D-ribulose 5-phosphate from D-glucose 6-phosphate (oxidative stage): step 2/3. In terms of biological role, catalyzes the hydrolysis of 6-phosphogluconolactone to 6-phosphogluconate. This is 6-phosphogluconolactonase from Klebsiella pneumoniae subsp. pneumoniae (strain ATCC 700721 / MGH 78578).